The sequence spans 396 residues: Interleukin-3 receptor subunit alpha (396 aa).

The first 16 residues, 1-16 (MAANLWLILGLLASHS), serve as a signal peptide directing secretion. Over 17–331 (SDLAAVREAP…VCPPEVMPVK (315 aa)) the chain is Extracellular. Cystine bridges form between cysteine 62/cysteine 79, cysteine 87/cysteine 223, cysteine 125/cysteine 134, cysteine 165/cysteine 187, and cysteine 245/cysteine 323. Asparagine 91 carries an N-linked (GlcNAc...) asparagine glycan. Residues asparagine 213, asparagine 246, asparagine 272, and asparagine 283 are each glycosylated (N-linked (GlcNAc...) asparagine). The short motif at 312-316 (LSSWS) is the WSXWS motif element. Residues 332-355 (TALVTSVATVLGAGLVAAGLLLWW) form a helical membrane-spanning segment. At 356 to 396 (RKSLLYRLCPPIPRLRLPLAGEMVVWEPALEDCEVTPVTDA) the chain is on the cytoplasmic side. A Glycyl lysine isopeptide (Lys-Gly) (interchain with G-Cter in ubiquitin) cross-link involves residue lysine 357. Residues 363–371 (LCPPIPRLR) carry the Box 1 motif motif.

This sequence belongs to the type I cytokine receptor family. Type 5 subfamily. As to quaternary structure, interacts with IL3. Heterodimer of an alpha and a beta subunit. The beta subunit is common to the IL3, IL5 and GM-CSF receptors. Post-translationally, ubiquitinated at Lys-357 by RNFT2 in response to IL3. Ubiquitination leads ligand-induced degradation by the proteasome. Ubiquitinated by RNF128 via 'Lys-27'-linked polyubiquitination, facilitating its degradation through the lysosomal pathway.

The protein localises to the cell membrane. It is found in the endomembrane system. Cell surface receptor for IL3 expressed on hematopoietic progenitor cells, monocytes and B-lymphocytes that controls the production and differentiation of hematopoietic progenitor cells into lineage-restricted cells. Ligand stimulation rapidly induces hetrodimerization with IL3RB, phosphorylation and enzyme activity of effector proteins such as JAK2 and PI3K that play a role in signaling cell proliferation and differentiation. Activation of JAK2 leads to STAT5-mediated transcriptional program. The protein is Interleukin-3 receptor subunit alpha (Il3ra) of Mus musculus (Mouse).